The primary structure comprises 656 residues: Methionine--tRNA ligase (656 aa).

A 'HIGH' region motif is present at residues 11 to 21 (YYVNDIPHIGH). Cys-126, Cys-129, Cys-147, and Cys-150 together coordinate Zn(2+). The short motif at 301-305 (KMSKS) is the 'KMSKS' region element. Lys-304 is an ATP binding site. A tRNA-binding domain is found at 555–656 (DFKKVEIKVG…REKIAGSLIS (102 aa)).

Belongs to the class-I aminoacyl-tRNA synthetase family. MetG type 2A subfamily. In terms of assembly, homodimer. Zn(2+) serves as cofactor.

The protein localises to the cytoplasm. It catalyses the reaction tRNA(Met) + L-methionine + ATP = L-methionyl-tRNA(Met) + AMP + diphosphate. Functionally, is required not only for elongation of protein synthesis but also for the initiation of all mRNA translation through initiator tRNA(fMet) aminoacylation. The sequence is that of Methionine--tRNA ligase (metG) from Helicobacter pylori (strain J99 / ATCC 700824) (Campylobacter pylori J99).